The following is a 499-amino-acid chain: Tyrosine-protein kinase Blk (499 aa).

Positions Met-1–Pro-34 are disordered. Gly-2 is lipidated: N-myristoyl glycine. In terms of domain architecture, SH3 spans Glu-52–Thr-112. The 97-residue stretch at Trp-118–Cys-214 folds into the SH2 domain. Positions Leu-235–Tyr-488 constitute a Protein kinase domain. ATP contacts are provided by residues Leu-241–Val-249 and Lys-263. Asp-354 (proton acceptor) is an active-site residue. Tyr-383 is modified (phosphotyrosine; by autocatalysis).

The protein belongs to the protein kinase superfamily. Tyr protein kinase family. SRC subfamily. Interacts with CBL (via SH2 domain). Interacts with CD79A and CD79B (via SH2 domain). Post-translationally, phosphorylated on tyrosine residues after antibody-mediated surface engagement of the B-cell antigen receptor (BCR). In terms of processing, ubiquitination of activated BLK by the UBE3A ubiquitin protein ligase leads to its degradation by the ubiquitin-proteasome pathway. As to expression, expressed in immature Vgamma2 gamma-delta T-cells (at protein level). Expressed in the B-cell lineage.

The protein localises to the cell membrane. It catalyses the reaction L-tyrosyl-[protein] + ATP = O-phospho-L-tyrosyl-[protein] + ADP + H(+). Its activity is regulated as follows. Antibody-mediated surface engagement of the B-cell antigen receptor (BCR) which results in the phosphorylation of BLK on tyrosine residues, stimulates the enzymatic activity. In terms of biological role, non-receptor tyrosine kinase involved in B-lymphocyte development, differentiation and signaling. B-cell receptor (BCR) signaling requires a tight regulation of several protein tyrosine kinases and phosphatases, and associated coreceptors. Binding of antigen to the B-cell antigen receptor (BCR) triggers signaling that ultimately leads to B-cell activation. Signaling through BLK plays an important role in transmitting signals through surface immunoglobulins and supports the pro-B to pre-B transition, as well as the signaling for growth arrest and apoptosis downstream of B-cell receptor. Specifically binds and phosphorylates CD79A at 'Tyr-188'and 'Tyr-199', as well as CD79B at 'Tyr-196' and 'Tyr-207'. Also phosphorylates the immunoglobulin G receptor FCGR2. With FYN and LYN, plays an essential role in pre-B-cell receptor (pre-BCR)-mediated NF-kappa-B activation. Also contributes to BTK activation by indirectly stimulating BTK intramolecular autophosphorylation. In pancreatic islets, acts as a modulator of beta-cells function through the up-regulation of PDX1 and NKX6-1 and consequent stimulation of insulin secretion in response to glucose. Phosphorylates CGAS, promoting retention of CGAS in the cytosol. The protein is Tyrosine-protein kinase Blk (Blk) of Mus musculus (Mouse).